A 479-amino-acid chain; its full sequence is Anaerobic nitric oxide reductase flavorubredoxin (479 aa).

Residues 30-210 (LRGSSYNSYL…PFSRLVTPKI (181 aa)) form a zinc metallo-hydrolase region. Residues His-79, Glu-81, Asp-83, His-147, Asp-166, and His-227 each coordinate Fe cation. One can recognise a Flavodoxin-like domain in the interval 254–393 (ITIFYDTMSN…LCREHGREIA (140 aa)). FMN is bound by residues 260–264 (TMSNN) and 342–369 (AFGSHGWSGGAVDRLSTRLQDAGFEMSL). In terms of domain architecture, Rubredoxin-like spans 423–474 (GPRMQCSVCQWIYDPAKGEPMQDVAPGTPWSEVPDNFLCPECSLGKDVFDEL). Residues Cys-428, Cys-431, Cys-461, and Cys-464 each contribute to the Fe cation site.

In the N-terminal section; belongs to the zinc metallo-hydrolase group 3 family. As to quaternary structure, homotetramer. The cofactor is Fe cation. FMN serves as cofactor.

Its subcellular location is the cytoplasm. The protein operates within nitrogen metabolism; nitric oxide reduction. Its function is as follows. Anaerobic nitric oxide reductase; uses NADH to detoxify nitric oxide (NO), protecting several 4Fe-4S NO-sensitive enzymes. Has at least 2 reductase partners, only one of which (NorW, flavorubredoxin reductase) has been identified. NO probably binds to the di-iron center; electrons enter from the NorW at rubredoxin and are transferred sequentially to the FMN center and the di-iron center. Also able to function as an aerobic oxygen reductase. The polypeptide is Anaerobic nitric oxide reductase flavorubredoxin (Escherichia coli O6:H1 (strain CFT073 / ATCC 700928 / UPEC)).